The primary structure comprises 424 residues: Kynurenine--oxoglutarate transaminase 1 (424 aa).

G36 serves as a coordination point for substrate. At K82 the chain carries N6-succinyllysine. N185 is a binding site for substrate. Position 247 is an N6-(pyridoxal phosphate)lysine (K247). Position 398 (R398) interacts with substrate. At K413 the chain carries N6-succinyllysine.

Belongs to the class-I pyridoxal-phosphate-dependent aminotransferase family. Homodimer. Requires pyridoxal 5'-phosphate as cofactor.

It is found in the cytoplasm. The protein localises to the cytosol. The catalysed reaction is L-kynurenine + 2-oxoglutarate = kynurenate + L-glutamate + H2O. It carries out the reaction 3-phenylpyruvate + L-glutamine = 2-oxoglutaramate + L-phenylalanine. It catalyses the reaction an S-substituted L-cysteine + H2O = a thiol + pyruvate + NH4(+). Its pathway is amino-acid degradation; L-kynurenine degradation; kynurenate from L-kynurenine: step 1/2. Its function is as follows. Catalyzes the irreversible transamination of the L-tryptophan metabolite L-kynurenine to form kynurenic acid (KA), an intermediate in the tryptophan catabolic pathway which is also a broad spectrum antagonist of the three ionotropic excitatory amino acid receptors among others. Metabolizes the cysteine conjugates of certain halogenated alkenes and alkanes to form reactive metabolites. Catalyzes the beta-elimination of S-conjugates and Se-conjugates of L-(seleno)cysteine, resulting in the cleavage of the C-S or C-Se bond. The protein is Kynurenine--oxoglutarate transaminase 1 (Kyat1) of Mus musculus (Mouse).